The sequence spans 349 residues: Probable ethanolamine kinase A (349 aa).

It belongs to the choline/ethanolamine kinase family.

It is found in the cytoplasm. The enzyme catalyses ethanolamine + ATP = phosphoethanolamine + ADP + H(+). It functions in the pathway phospholipid metabolism; phosphatidylethanolamine biosynthesis; phosphatidylethanolamine from ethanolamine: step 1/3. Highly specific for ethanolamine phosphorylation. May be a rate-controlling step in phosphatidylethanolamine biosynthesis. This Dictyostelium discoideum (Social amoeba) protein is Probable ethanolamine kinase A (etnkA).